The sequence spans 1129 residues: MTGSDDSSVDYFREGFDDITDDEFPDATRNAVGSSPRPAKRRRRDGTASDVRRRPSENRESQRYSDGGSPQTGSDSFVVDDDEGNYDELQSPSQDSYFEDAEAPSKYKVFIPKRSNIQENIFVTQLTQPPSPPEMIRGPRWKKPEPSIARASTIPTQTIGEGRAAPNAPAASVDDYDDEDLNAAIAASLESFENEQSRPPPSNTKAPTHQPITRSPTVQNEGATDTSFLLEDIPDDAFDSDISLSPPTRAQQQPATRQFGQSSNRPLGVRQTSLFDMTSRNQTDQPPIGEQVWSPPQKDEPPTQHKLDHDALSTWVYPTNLGKTRDYQFNIAQKGLFHNLLVALPTGLGKTFIAATIMLNWFRWTESAQIIFVAPTKPLVAQQISACFGIAGIPRSQTTMLTGEAAPGIRAEEWQNKRVFFMTPQTLINDLKSGIADPKRIVLLVVDEAHRATGGYAYVEVVKFLRRYNQSFRVLALTATPGSTVESVQAVIDGLDIARVEIRTEQSLDIREYVHSRNTEVQTFKNSEEMVLCMDLLSKTLQPLVDQLRTLNAYWGRDPMMLTAFGLTKSRQQWMASDAGRNAHFGLKGKVNAIFTVLASLAHAIDLLKYHGITPFYRHLLHFQSNTEGQKGGKYQRQVVQDESFKKLINHLQPWTKNPEFIGHPKLEYLKSVVLNHFMDAGEGSNGEASDSQSSTRIMIFVHFRDSAEEVTRVLKRYEPMIRPHVFVGQSSAKGSEGMGQKTQLDIVQKFKKGTYNTIVATSIGEEGLDIGEVDLIVCYDSSASPIRMLQRMGRTGRKRAGNIVLLLMEGKEEESYIKAKDNYEKMQQMIASGSRFTFHDDISPRILPAGIRPVADKRHIDIPDENAEQSLPEPKRRGRAPKRPPKKFHMPDNVETGFTKASSLTAGPKSKAEKSRKPRTPTPEPVEIPALEEVVLTSAQQRELEQHYRNIGAASPQFIRNPRNDAFPRLQLVARPTKVVKHGSLTRRMIGTLQKMNNVGPDCGDRFKKILALESARQGDSVIPNRSPRHERRRRLSKTKPRYNHLSTSVDKETLSTEDSQLVTPEHLLSSVVKGQKQQPFYSSQRSKDDDSDDNFDPPDLATLLTRSAERNNAHKTSRFVVSDDSDD.

3 disordered regions span residues 1 to 101 (MTGS…FEDA), 124 to 222 (TQLT…QNEG), and 236 to 306 (DAFD…TQHK). The segment covering 45–63 (DGTASDVRRRPSENRESQR) has biased composition (basic and acidic residues). 2 stretches are compositionally biased toward polar residues: residues 203–222 (NTKAPTHQPITRSPTVQNEG) and 242–285 (ISLS…QTDQ). A compositionally biased stretch (basic and acidic residues) spans 297 to 306 (QKDEPPTQHK). The 169-residue stretch at 331–499 (IAQKGLFHNL…AVIDGLDIAR (169 aa)) folds into the Helicase ATP-binding domain. Position 344–351 (344–351 (LPTGLGKT)) interacts with ATP. The DEAH box motif lies at 447 to 450 (DEAH). One can recognise a Helicase C-terminal domain in the interval 674–843 (VLNHFMDAGE…GSRFTFHDDI (170 aa)). Disordered regions lie at residues 863-930 (IPDE…VEIP), 1018-1060 (RQGD…STED), and 1072-1129 (SVVK…DSDD). Basic residues-rich tracts occupy residues 877–889 (RRGRAPKRPPKKF) and 1028–1044 (SPRHERRRRLSKTKPRY). The span at 1077–1086 (QKQQPFYSSQ) shows a compositional bias: polar residues.

The protein belongs to the DEAD box helicase family. DEAH subfamily. FANCM sub-subfamily. In terms of assembly, interacts with the MHF histone-fold complex to form the FANCM-MHF complex.

The protein localises to the nucleus. It carries out the reaction ATP + H2O = ADP + phosphate + H(+). ATP-dependent DNA helicase involved in DNA damage repair by homologous recombination and in genome maintenance. Capable of unwinding D-loops. Plays a role in limiting crossover recombinants during mitotic DNA double-strand break (DSB) repair. Component of a FANCM-MHF complex which promotes gene conversion at blocked replication forks, probably by reversal of the stalled fork. This is ATP-dependent DNA helicase mph1 from Aspergillus oryzae (strain ATCC 42149 / RIB 40) (Yellow koji mold).